We begin with the raw amino-acid sequence, 302 residues long: MEPLISMGVLALIGVAATIAGASEDLESDIGSQSNPNSQVQLAPQMMFPHRIFNKAISGEPPSNALMCSIGAAVATVLISEFTMSPLFALVFGSLIAACVHATFAVTSTMGRCASQSRFKQPIYLDMIRSHITPIMGYAFITTFCILVVSYLMTVVLGHPFPLTMLAFIWGITIGAIGSSTGDVHYGAEREFQQFEFGSGLNASNSGNIVRYAESGLRDGFDNSWFCAKFGGPVTGLAFGMTVFLGSWITTIFDPAKGLGWLSVIAGIVIVFILIIWNWKMEVYARKAYGPYKEDKTEEASA.

Transmembrane regions (helical) follow at residues 3–23 (PLISMGVLALIGVAATIAGAS), 86–106 (PLFALVFGSLIAACVHATFAV), 132–152 (ITPIMGYAFITTFCILVVSYL), 155–175 (VVLGHPFPLTMLAFIWGITIG), 233–253 (PVTGLAFGMTVFLGSWITTIF), and 259–279 (LGWLSVIAGIVIVFILIIWNW).

The protein belongs to the MtrE family. In terms of assembly, the complex is composed of 8 subunits; MtrA, MtrB, MtrC, MtrD, MtrE, MtrF, MtrG and MtrH.

The protein localises to the cell membrane. It catalyses the reaction 5-methyl-5,6,7,8-tetrahydromethanopterin + coenzyme M + 2 Na(+)(in) = 5,6,7,8-tetrahydromethanopterin + methyl-coenzyme M + 2 Na(+)(out). It functions in the pathway one-carbon metabolism; methanogenesis from CO(2); methyl-coenzyme M from 5,10-methylene-5,6,7,8-tetrahydromethanopterin: step 2/2. Its function is as follows. Part of a complex that catalyzes the formation of methyl-coenzyme M and tetrahydromethanopterin from coenzyme M and methyl-tetrahydromethanopterin. This is an energy-conserving, sodium-ion translocating step. This Methanosarcina barkeri (strain Fusaro / DSM 804) protein is Tetrahydromethanopterin S-methyltransferase subunit E.